The primary structure comprises 147 residues: 18 kDa antigen 1 (147 aa).

A sHSP domain is found at 21–131 (TPTRPAVMPM…RPRKIAVGAA (111 aa)).

Belongs to the small heat shock protein (HSP20) family.

In terms of biological role, not known. This protein is one of the major immune reactive proteins in mycobacteria. The sequence is that of 18 kDa antigen 1 from Mycobacterium avium.